Here is a 750-residue protein sequence, read N- to C-terminus: (13E)-labda-7,13-dien-15-ol synthase (750 aa).

Mg(2+)-binding residues include D284, D286, D501, D505, N647, T651, and E655. Positions 284-287 (DIDD) match the DXDD motif motif. Residues 501 to 505 (DDLAD) carry the DDXXD motif motif.

This sequence belongs to the terpene synthase family. Mg(2+) is required as a cofactor.

It carries out the reaction geranylgeranyl diphosphate + H2O = (13E)-labda-7,13-dien-15-ol + diphosphate. Its pathway is secondary metabolite biosynthesis; terpenoid biosynthesis. Its function is as follows. Bifunctional diterpene synthase that directly generates the endocyclic double bond, as well as the hydroxyl group: produces an endocyclic double bond isomer of copalyl diphosphate (CPP), and carries out subsequent replacement of the diphosphate by a hydroxyl group to form (13E)-labda-7,13-dien-15-ol. The protein is (13E)-labda-7,13-dien-15-ol synthase of Selaginella moellendorffii (Spikemoss).